Consider the following 496-residue polypeptide: METYILSLDQGTTSSRAILFNKKGEIVHSAQKEFTQYFPKPGWVEHNAQEIWGSILAVIATCLSEADVKPEQIAGIGITNQRETAVVWEKATGKPVYNAIVWQSRQTAEICEELKEKGYGDMVREKTGLLIDAYFSGTKVKWILDNVEGAREKAERGELLFGTIDTWLVWKLSGGKAHVTDYSNASRTLMFNIHDLKWDDELLEILTVPKSMLPEVRPSSEVYGHTVDYHFFSQNVPIAGVAGDQQAALFGQACFSEGMAKNTYGTGCFMLMNTGETAVNSNHGLLTTIAWGLNGKVNYALEGSIFVAGSAIQWLRDGMRMVNDASESEEYASRVESTDGVYVVPAFVGLGTPYWDSEVRGAVFGVTRGTTKEHFIRATLESLGYQTRDVLCAMEADSGIELKTLRVDGGAVKNNFLMQFQSDMLQVPVERPMISETTALGAAYLAGLAVGYWESQEEIKAQWDMDRSFTPEMEKERSEELYSGWKKAIEATKAFK.

T12 contributes to the ADP binding site. ATP-binding residues include T12, T13, and S14. A sn-glycerol 3-phosphate-binding site is contributed by T12. R16 lines the ADP pocket. Residues R82, E83, and Y134 each coordinate sn-glycerol 3-phosphate. Positions 82, 83, and 134 each coordinate glycerol. The residue at position 230 (H230) is a Phosphohistidine; by HPr. D244 contributes to the sn-glycerol 3-phosphate binding site. Glycerol contacts are provided by D244 and Q245. ADP contacts are provided by T266 and G309. ATP is bound by residues T266, G309, Q313, and G410. The ADP site is built by G410 and N414.

It belongs to the FGGY kinase family. In terms of assembly, homotetramer and homodimer (in equilibrium). In terms of processing, the phosphoenolpyruvate-dependent sugar phosphotransferase system (PTS), including enzyme I, and histidine-containing protein (HPr) are required for the phosphorylation, which leads to the activation of the enzyme.

It catalyses the reaction glycerol + ATP = sn-glycerol 3-phosphate + ADP + H(+). Its pathway is polyol metabolism; glycerol degradation via glycerol kinase pathway; sn-glycerol 3-phosphate from glycerol: step 1/1. With respect to regulation, activated by phosphorylation and inhibited by fructose 1,6-bisphosphate (FBP). Its function is as follows. Key enzyme in the regulation of glycerol uptake and metabolism. Catalyzes the phosphorylation of glycerol to yield sn-glycerol 3-phosphate. The polypeptide is Glycerol kinase (Bacillus cytotoxicus (strain DSM 22905 / CIP 110041 / 391-98 / NVH 391-98)).